The sequence spans 103 residues: KRLPGESGVSVNQVIPEGASLKYLKDLPRAWFNAVPYREVGLMTATFSEKEYGMPYISITPMGISNTADFIEQIGKLVNVWASVLSERKLNYRLYVENQTKFV.

It belongs to the ChlB/BchB/BchZ family. As to quaternary structure, protochlorophyllide reductase is composed of three subunits; ChlL, ChlN and ChlB. Forms a heterotetramer of two ChlB and two ChlN subunits. It depends on [4Fe-4S] cluster as a cofactor.

It localises to the plastid. Its subcellular location is the chloroplast. It carries out the reaction chlorophyllide a + oxidized 2[4Fe-4S]-[ferredoxin] + 2 ADP + 2 phosphate = protochlorophyllide a + reduced 2[4Fe-4S]-[ferredoxin] + 2 ATP + 2 H2O. It participates in porphyrin-containing compound metabolism; chlorophyll biosynthesis (light-independent). Its function is as follows. Component of the dark-operative protochlorophyllide reductase (DPOR) that uses Mg-ATP and reduced ferredoxin to reduce ring D of protochlorophyllide (Pchlide) to form chlorophyllide a (Chlide). This reaction is light-independent. The NB-protein (ChlN-ChlB) is the catalytic component of the complex. This chain is Light-independent protochlorophyllide reductase subunit B (chlB), found in Claytosmunda claytoniana (Interrupted fern).